Consider the following 332-residue polypeptide: Tryptophan--tRNA ligase (332 aa).

Residues 11 to 13 and 19 to 20 each bind ATP; these read QPS and GN. The 'HIGH' region signature appears at 12–20; sequence PSGELTIGN. D135 contacts L-tryptophan. ATP is bound by residues 147–149, V186, and 195–199; these read GQD and KMSKS. The short motif at 195-199 is the 'KMSKS' region element; that stretch reads KMSKS.

Belongs to the class-I aminoacyl-tRNA synthetase family. As to quaternary structure, homodimer.

It is found in the cytoplasm. It carries out the reaction tRNA(Trp) + L-tryptophan + ATP = L-tryptophyl-tRNA(Trp) + AMP + diphosphate + H(+). Catalyzes the attachment of tryptophan to tRNA(Trp). This is Tryptophan--tRNA ligase from Shewanella oneidensis (strain ATCC 700550 / JCM 31522 / CIP 106686 / LMG 19005 / NCIMB 14063 / MR-1).